Consider the following 379-residue polypeptide: 8-amino-7-oxononanoate synthase (379 aa).

Substrate-binding residues include R27 and R34. 114 to 115 (GY) provides a ligand contact to pyridoxal 5'-phosphate. H139 contributes to the substrate binding site. Residues S187, 212 to 215 (DDAH), and 232 to 235 (TLSK) contribute to the pyridoxal 5'-phosphate site. Residue K235 is modified to N6-(pyridoxal phosphate)lysine. Residue T344 coordinates substrate.

It belongs to the class-II pyridoxal-phosphate-dependent aminotransferase family. BioF subfamily. Homodimer. Pyridoxal 5'-phosphate serves as cofactor.

It catalyses the reaction 6-carboxyhexanoyl-[ACP] + L-alanine + H(+) = (8S)-8-amino-7-oxononanoate + holo-[ACP] + CO2. It functions in the pathway cofactor biosynthesis; biotin biosynthesis. Its function is as follows. Catalyzes the decarboxylative condensation of pimeloyl-[acyl-carrier protein] and L-alanine to produce 8-amino-7-oxononanoate (AON), [acyl-carrier protein], and carbon dioxide. The polypeptide is 8-amino-7-oxononanoate synthase (Methylobacterium sp. (strain 4-46)).